The chain runs to 391 residues: Probable sugar efflux transporter (391 aa).

The next 12 helical transmembrane spans lie at 16-36 (VFVF…PVAL), 51-71 (VGLM…PLML), 82-102 (LLFL…AWNF), 110-130 (MGIA…VIRV), 138-158 (QALG…LPLG), 170-190 (TFGV…KLLP), 210-230 (PLLM…FTTY), 247-267 (ITTL…FLFG), 277-297 (FIAF…VFKN), 300-320 (WVVF…GISL), 338-358 (IYSG…SIVI), and 361-381 (LGLG…LFWL).

The protein belongs to the major facilitator superfamily. SotB (TC 2.A.1.2) family.

Its subcellular location is the cell inner membrane. In terms of biological role, involved in the efflux of sugars. The physiological role may be the reduction of the intracellular concentration of toxic sugars or sugar metabolites. This chain is Probable sugar efflux transporter, found in Helicobacter pylori (strain ATCC 700392 / 26695) (Campylobacter pylori).